A 447-amino-acid chain; its full sequence is Methionine aminopeptidase 2 (447 aa).

Positions 1–86 (MAGATEGEDT…KNKKKKKKKI (86 aa)) are disordered. Residues 8–32 (EDTKVIESKINELNIDKPKLEDNNE) are compositionally biased toward basic and acidic residues. Residues 43–60 (GGDDDDDKEDDDDNDEIT) show a composition bias toward acidic residues. Positions 71–86 (KKKKKNKNKKKKKKKI) are enriched in basic residues. His-198 serves as a coordination point for substrate. Positions 218, 229, and 300 each coordinate a divalent metal cation. Residue His-308 participates in substrate binding. Positions 333 and 428 each coordinate a divalent metal cation.

The protein belongs to the peptidase M24A family. Methionine aminopeptidase eukaryotic type 2 subfamily. Co(2+) is required as a cofactor. The cofactor is Zn(2+). Requires Mn(2+) as cofactor. Fe(2+) serves as cofactor.

The protein localises to the cytoplasm. It catalyses the reaction Release of N-terminal amino acids, preferentially methionine, from peptides and arylamides.. Functionally, cotranslationally removes the N-terminal methionine from nascent proteins. The N-terminal methionine is often cleaved when the second residue in the primary sequence is small and uncharged (Met-Ala-, Cys, Gly, Pro, Ser, Thr, or Val). The chain is Methionine aminopeptidase 2 from Candida albicans (strain WO-1) (Yeast).